A 245-amino-acid polypeptide reads, in one-letter code: 3-deoxy-manno-octulosonate cytidylyltransferase (245 aa).

It belongs to the KdsB family.

It localises to the cytoplasm. The enzyme catalyses 3-deoxy-alpha-D-manno-oct-2-ulosonate + CTP = CMP-3-deoxy-beta-D-manno-octulosonate + diphosphate. The protein operates within nucleotide-sugar biosynthesis; CMP-3-deoxy-D-manno-octulosonate biosynthesis; CMP-3-deoxy-D-manno-octulosonate from 3-deoxy-D-manno-octulosonate and CTP: step 1/1. It participates in bacterial outer membrane biogenesis; lipopolysaccharide biosynthesis. Activates KDO (a required 8-carbon sugar) for incorporation into bacterial lipopolysaccharide in Gram-negative bacteria. The polypeptide is 3-deoxy-manno-octulosonate cytidylyltransferase (Rhodopseudomonas palustris (strain ATCC BAA-98 / CGA009)).